Reading from the N-terminus, the 323-residue chain is tRNA U34 carboxymethyltransferase (323 aa).

Carboxy-S-adenosyl-L-methionine is bound by residues Lys91, Trp105, Lys110, Gly130, 180–181 (VE), Met196, Tyr200, and Arg315.

Belongs to the class I-like SAM-binding methyltransferase superfamily. CmoB family. In terms of assembly, homotetramer.

The enzyme catalyses carboxy-S-adenosyl-L-methionine + 5-hydroxyuridine(34) in tRNA = 5-carboxymethoxyuridine(34) in tRNA + S-adenosyl-L-homocysteine + H(+). In terms of biological role, catalyzes carboxymethyl transfer from carboxy-S-adenosyl-L-methionine (Cx-SAM) to 5-hydroxyuridine (ho5U) to form 5-carboxymethoxyuridine (cmo5U) at position 34 in tRNAs. The chain is tRNA U34 carboxymethyltransferase from Trichlorobacter lovleyi (strain ATCC BAA-1151 / DSM 17278 / SZ) (Geobacter lovleyi).